The primary structure comprises 68 residues: Antimicrobial peptide VpCT3 (68 aa).

A signal peptide spans 1 to 23 (MKTQIVILIVAVLVLQLVSQSDA). Leucine amide is present on Leu-36. Positions 37–68 (GKRGLKNLDQYNDLFDGEISDADIKFLQDLMR) are excised as a propeptide.

The protein belongs to the non-disulfide-bridged peptide (NDBP) superfamily. Short antimicrobial peptide (group 4) family. As to expression, expressed by the venom gland.

It localises to the secreted. The protein localises to the target cell membrane. Its function is as follows. Antimicrobial peptide with weak activity against all bacteria tested (MIC&gt;100 uM) and all yeasts tested (MIC&gt;200 uM). Also provokes weak hemolysis on human erythrocytes (HC(50)=83.7 uM). This is Antimicrobial peptide VpCT3 from Mesomexovis punctatus (Scorpion).